We begin with the raw amino-acid sequence, 288 residues long: Homoserine kinase (288 aa).

Residue 78–88 coordinates ATP; that stretch reads PLARGLGSSSS.

Belongs to the GHMP kinase family. Homoserine kinase subfamily.

Its subcellular location is the cytoplasm. It catalyses the reaction L-homoserine + ATP = O-phospho-L-homoserine + ADP + H(+). The protein operates within amino-acid biosynthesis; L-threonine biosynthesis; L-threonine from L-aspartate: step 4/5. Its function is as follows. Catalyzes the ATP-dependent phosphorylation of L-homoserine to L-homoserine phosphate. The chain is Homoserine kinase from Streptococcus mutans serotype c (strain ATCC 700610 / UA159).